A 227-amino-acid polypeptide reads, in one-letter code: Cytochrome c oxidase subunit 2 (227 aa).

The Mitochondrial intermembrane portion of the chain corresponds to 1 to 14; sequence MAYPVQLGFQDAAS. The chain crosses the membrane as a helical span at residues 15–45; the sequence is PIMEELLYFHDHTLMIVFLISSLVLYIISLM. The Mitochondrial matrix portion of the chain corresponds to 46–59; the sequence is LTTKLMHTSTMDAQ. A helical transmembrane segment spans residues 60-87; that stretch reads EVETVWTILPAIILILIALPSLRILYMM. Over 88-227 the chain is Mitochondrial intermembrane; that stretch reads DEITTPSLTL…HFEEWLLSMF (140 aa). 6 residues coordinate Cu cation: His-161, Cys-196, Glu-198, Cys-200, His-204, and Met-207. Position 198 (Glu-198) interacts with Mg(2+).

The protein belongs to the cytochrome c oxidase subunit 2 family. Component of the cytochrome c oxidase (complex IV, CIV), a multisubunit enzyme composed of 14 subunits. The complex is composed of a catalytic core of 3 subunits MT-CO1, MT-CO2 and MT-CO3, encoded in the mitochondrial DNA, and 11 supernumerary subunits COX4I, COX5A, COX5B, COX6A, COX6B, COX6C, COX7A, COX7B, COX7C, COX8 and NDUFA4, which are encoded in the nuclear genome. The complex exists as a monomer or a dimer and forms supercomplexes (SCs) in the inner mitochondrial membrane with NADH-ubiquinone oxidoreductase (complex I, CI) and ubiquinol-cytochrome c oxidoreductase (cytochrome b-c1 complex, complex III, CIII), resulting in different assemblies (supercomplex SCI(1)III(2)IV(1) and megacomplex MCI(2)III(2)IV(2)). Found in a complex with TMEM177, COA6, COX18, COX20, SCO1 and SCO2. Interacts with TMEM177 in a COX20-dependent manner. Interacts with COX20. Interacts with COX16. The cofactor is Cu cation.

It is found in the mitochondrion inner membrane. The enzyme catalyses 4 Fe(II)-[cytochrome c] + O2 + 8 H(+)(in) = 4 Fe(III)-[cytochrome c] + 2 H2O + 4 H(+)(out). Component of the cytochrome c oxidase, the last enzyme in the mitochondrial electron transport chain which drives oxidative phosphorylation. The respiratory chain contains 3 multisubunit complexes succinate dehydrogenase (complex II, CII), ubiquinol-cytochrome c oxidoreductase (cytochrome b-c1 complex, complex III, CIII) and cytochrome c oxidase (complex IV, CIV), that cooperate to transfer electrons derived from NADH and succinate to molecular oxygen, creating an electrochemical gradient over the inner membrane that drives transmembrane transport and the ATP synthase. Cytochrome c oxidase is the component of the respiratory chain that catalyzes the reduction of oxygen to water. Electrons originating from reduced cytochrome c in the intermembrane space (IMS) are transferred via the dinuclear copper A center (CU(A)) of subunit 2 and heme A of subunit 1 to the active site in subunit 1, a binuclear center (BNC) formed by heme A3 and copper B (CU(B)). The BNC reduces molecular oxygen to 2 water molecules using 4 electrons from cytochrome c in the IMS and 4 protons from the mitochondrial matrix. The sequence is that of Cytochrome c oxidase subunit 2 (MT-CO2) from Propithecus tattersalli (Golden-crowned Sifaka).